A 557-amino-acid chain; its full sequence is Iron-sulfur cluster assembly SufBD family protein ABCI8, chloroplastic (557 aa).

The tract at residues 1–47 is disordered; the sequence is MASLLANGISSFSPQPTSDSSKSPKGFHPKPESLKFPSPKSLNPTRP. The transit peptide at 1 to 52 directs the protein to the chloroplast; that stretch reads MASLLANGISSFSPQPTSDSSKSPKGFHPKPESLKFPSPKSLNPTRPIFKLR. Low complexity predominate over residues 10–24; it reads SSFSPQPTSDSSKSP.

It belongs to the iron-sulfur cluster assembly SufBD family.

The protein resides in the plastid. It localises to the chloroplast. Its function is as follows. Involved in light signaling, probably by mediating the transport and correct distribution of protoporphyrin IX, a chlorophyll precursor, in response to far-red light. The sequence is that of Iron-sulfur cluster assembly SufBD family protein ABCI8, chloroplastic (ABCI8) from Arabidopsis thaliana (Mouse-ear cress).